A 77-amino-acid polypeptide reads, in one-letter code: Conotoxin Vc6c (77 aa).

A signal peptide spans 1–22; it reads MKLTCMVIVAVLFLTANTFVTA. Positions 23–51 are excised as a propeptide; that stretch reads DDSGNGLENLFSKAHHEIKNPEASNLNKR. Cystine bridges form between cysteine 52–cysteine 67, cysteine 59–cysteine 71, and cysteine 66–cysteine 76.

In terms of tissue distribution, expressed by the venom duct.

It localises to the secreted. The polypeptide is Conotoxin Vc6c (Conus victoriae (Queen Victoria cone)).